Here is a 647-residue protein sequence, read N- to C-terminus: tRNA 5-methylaminomethyl-2-thiouridine biosynthesis bifunctional protein MnmC (647 aa).

The segment at 1–227 (MLTWKNNLTP…KREMLIGSYS (227 aa)) is tRNA (mnm(5)s(2)U34)-methyltransferase. The FAD-dependent cmnm(5)s(2)U34 oxidoreductase stretch occupies residues 256-647 (VGAGIAGTTL…ARFLYRKVRK (392 aa)).

The protein in the N-terminal section; belongs to the methyltransferase superfamily. tRNA (mnm(5)s(2)U34)-methyltransferase family. It in the C-terminal section; belongs to the DAO family. FAD is required as a cofactor.

The protein resides in the cytoplasm. It catalyses the reaction 5-aminomethyl-2-thiouridine(34) in tRNA + S-adenosyl-L-methionine = 5-methylaminomethyl-2-thiouridine(34) in tRNA + S-adenosyl-L-homocysteine + H(+). Catalyzes the last two steps in the biosynthesis of 5-methylaminomethyl-2-thiouridine (mnm(5)s(2)U) at the wobble position (U34) in tRNA. Catalyzes the FAD-dependent demodification of cmnm(5)s(2)U34 to nm(5)s(2)U34, followed by the transfer of a methyl group from S-adenosyl-L-methionine to nm(5)s(2)U34, to form mnm(5)s(2)U34. This is tRNA 5-methylaminomethyl-2-thiouridine biosynthesis bifunctional protein MnmC from Leptospira interrogans serogroup Icterohaemorrhagiae serovar Lai (strain 56601).